A 455-amino-acid polypeptide reads, in one-letter code: Probable ATP-dependent RNA helicase DDX47 (455 aa).

Over residues 1–10 (MAAPEEHDSP) the composition is skewed to basic and acidic residues. The segment at 1-20 (MAAPEEHDSPTEASQPIVEE) is disordered. Position 2 is an N-acetylalanine (alanine 2). Serine 9 is modified (phosphoserine). The Q motif motif lies at 24–52 (KTFKDLGVTDVLCEACDQLGWTKPTKIQI). The Helicase ATP-binding domain occupies 55–226 (IPLALQGRDI…RAALKNPVKC (172 aa)). Residue 68–75 (AETGSGKT) coordinates ATP. Threonine 149 bears the Phosphothreonine mark. The short motif at 174–177 (DEAD) is the DEAD box element. Residues 237–397 (KLQQYYIFIP…GFPTQDDEVM (161 aa)) form the Helicase C-terminal domain. A compositionally biased stretch (basic and acidic residues) spans 413–428 (ELREHGEKKKRSREDA). Residues 413–455 (ELREHGEKKKRSREDAGDNDDTEGAIGVRNKVAGGKMKKRKGR) form a disordered region. The residue at position 424 (serine 424) is a Phosphoserine.

The protein belongs to the DEAD box helicase family. DDX47/RRP3 subfamily. Interacts with AGO1 and AGO2. Interacts with GABARAP. Interacts with NOL8; the interaction is RNA-dependent. As to expression, expressed in skin, lung and breast. Also expressed in the brain.

The protein resides in the nucleus. Its subcellular location is the nucleolus. It carries out the reaction ATP + H2O = ADP + phosphate + H(+). Functionally, required for efficient ribosome biogenesis. May have a role in mRNA splicing. Involved in apoptosis. This Homo sapiens (Human) protein is Probable ATP-dependent RNA helicase DDX47 (DDX47).